We begin with the raw amino-acid sequence, 293 residues long: Kynurenine formamidase (293 aa).

The HGGXW motif lies at 84–88 (HGGYW). Catalysis depends on Ser153, which acts as the Nucleophile. Residues Asp236 and His268 contribute to the active site.

This sequence belongs to the kynurenine formamidase family. In terms of assembly, homodimer.

The protein resides in the cytoplasm. The protein localises to the cytosol. It is found in the nucleus. It catalyses the reaction N-formyl-L-kynurenine + H2O = L-kynurenine + formate + H(+). It functions in the pathway amino-acid degradation; L-tryptophan degradation via kynurenine pathway; L-kynurenine from L-tryptophan: step 2/2. Its function is as follows. Catalyzes the hydrolysis of N-formyl-L-kynurenine to L-kynurenine, the second step in the kynurenine pathway of tryptophan degradation. Kynurenine may be further oxidized to nicotinic acid, NAD(H) and NADP(H). Required for elimination of toxic metabolites. The polypeptide is Kynurenine formamidase (afmid) (Danio rerio (Zebrafish)).